Consider the following 465-residue polypeptide: Iron-sulfur cluster assembly SufBD family protein SERP0500 (465 aa).

Belongs to the iron-sulfur cluster assembly SufBD family.

This is Iron-sulfur cluster assembly SufBD family protein SERP0500 from Staphylococcus epidermidis (strain ATCC 35984 / DSM 28319 / BCRC 17069 / CCUG 31568 / BM 3577 / RP62A).